Reading from the N-terminus, the 413-residue chain is Divalent metal cation transporter MntH (413 aa).

At 1-19 (MTDNRVENSSGRAARKLRL) the chain is on the cytoplasmic side. The chain crosses the membrane as a helical span at residues 20–39 (ALMGPAFIAAIGYIDPGNFA). Topologically, residues 40–51 (TNIQAGASFGYQ) are periplasmic. A helical membrane pass occupies residues 52 to 71 (LLWVVVWANLMAMLIQILSA). Topologically, residues 72 to 95 (KLGIATGKNLAEQIRDHYPRPVVW) are cytoplasmic. Residues 96–118 (FYWVQAEIIAMATDLAEFIGAAI) traverse the membrane as a helical segment. The Periplasmic segment spans residues 119 to 125 (GFKLILG). A helical transmembrane segment spans residues 126–145 (VSLLQGAVLTGIATFLILML). Residues 146–155 (QRRGQKPLEK) lie on the Cytoplasmic side of the membrane. A helical transmembrane segment spans residues 156-175 (VIGGLLLFVAAAYIVELFFS). The Periplasmic segment spans residues 176–196 (QPDMAQLGKGMVIPALPNPEA). The chain crosses the membrane as a helical span at residues 197–220 (VFLAAGVLGATIMPHVIYLHSSLT). Residues 221-238 (QHLHGGTRQQRYSATKWD) are Cytoplasmic-facing. Residues 239–258 (VAIAMTIAGFVNLAMMATAA) form a helical membrane-spanning segment. Topologically, residues 259–276 (AAFHFSGHTGIADLDQAY) are periplasmic. A helical transmembrane segment spans residues 277-297 (LTLEPLLSHAAATVFGLSLVA). At 298-327 (AGLSSTVVGTLAGQVVMQGFVRFHIPLWVR) the chain is on the cytoplasmic side. A helical membrane pass occupies residues 328 to 344 (RSITMLPSFIVILMGLD). Over 345–350 (PTRILV) the chain is Periplasmic. Residues 351–370 (MSQVLLSFGIALALVPLLIF) form a helical membrane-spanning segment. Over 371-387 (TSNATLMGELVNTRRVK) the chain is Cytoplasmic. The helical transmembrane segment at 388 to 406 (QIGWIIVVLVVALNIWLLV) threads the bilayer. Over 407 to 413 (GTVMGLS) the chain is Periplasmic.

Belongs to the NRAMP family.

Its subcellular location is the cell inner membrane. H(+)-stimulated, divalent metal cation uptake system. This Salmonella gallinarum (strain 287/91 / NCTC 13346) protein is Divalent metal cation transporter MntH.